The following is a 370-amino-acid chain: uncharacterized protein (370 aa).

Residues Asp-152, His-154, Asp-184, Asn-215, His-306, and His-308 each contribute to the a divalent metal cation site.

The protein belongs to the metallophosphoesterase superfamily. The cofactor is a divalent metal cation.

This is an uncharacterized protein from Helicobacter pylori (strain ATCC 700392 / 26695) (Campylobacter pylori).